The primary structure comprises 151 residues: Putative pre-16S rRNA nuclease (151 aa).

This sequence belongs to the YqgF nuclease family.

It is found in the cytoplasm. Its function is as follows. Could be a nuclease involved in processing of the 5'-end of pre-16S rRNA. The sequence is that of Putative pre-16S rRNA nuclease from Bifidobacterium longum subsp. infantis (strain ATCC 15697 / DSM 20088 / JCM 1222 / NCTC 11817 / S12).